A 202-amino-acid chain; its full sequence is UDP-N-acetylglucosamine transferase subunit ALG13 (202 aa).

This sequence belongs to the glycosyltransferase 28 family. In terms of assembly, heterodimer with ALG14 to form a functional enzyme.

Its subcellular location is the endoplasmic reticulum. The enzyme catalyses an N-acetyl-alpha-D-glucosaminyl-diphospho-di-trans,poly-cis-dolichol + UDP-N-acetyl-alpha-D-glucosamine = an N,N'-diacetylchitobiosyl-diphospho-di-trans,poly-cis-dolichol + UDP + H(+). Functionally, involved in protein N-glycosylation. Essential for the second step of the dolichol-linked oligosaccharide pathway. In Saccharomyces cerevisiae (strain ATCC 204508 / S288c) (Baker's yeast), this protein is UDP-N-acetylglucosamine transferase subunit ALG13 (ALG13).